Consider the following 642-residue polypeptide: Threonine--tRNA ligase (642 aa).

A TGS domain is found at 1–61; the sequence is MPIITLPDGS…EHDASLEIIT (61 aa). The catalytic stretch occupies residues 244-535; that stretch reads DHRKIGKQLD…LIEEYAGFFP (292 aa). C335, H386, and H512 together coordinate Zn(2+).

It belongs to the class-II aminoacyl-tRNA synthetase family. Homodimer. Zn(2+) serves as cofactor.

It is found in the cytoplasm. It catalyses the reaction tRNA(Thr) + L-threonine + ATP = L-threonyl-tRNA(Thr) + AMP + diphosphate + H(+). Catalyzes the attachment of threonine to tRNA(Thr) in a two-step reaction: L-threonine is first activated by ATP to form Thr-AMP and then transferred to the acceptor end of tRNA(Thr). Also edits incorrectly charged L-seryl-tRNA(Thr). This Vibrio cholerae serotype O1 (strain ATCC 39541 / Classical Ogawa 395 / O395) protein is Threonine--tRNA ligase.